We begin with the raw amino-acid sequence, 151 residues long: Arginine repressor (151 aa).

Belongs to the ArgR family.

The protein localises to the cytoplasm. It functions in the pathway amino-acid biosynthesis; L-arginine biosynthesis [regulation]. Regulates arginine biosynthesis genes. This is Arginine repressor from Pelotomaculum thermopropionicum (strain DSM 13744 / JCM 10971 / SI).